The sequence spans 457 residues: Methylenetetrahydrofolate--tRNA-(uracil-5-)-methyltransferase TrmFO (457 aa).

8–13 (GGGLAG) contacts FAD.

The protein belongs to the MnmG family. TrmFO subfamily. FAD is required as a cofactor.

Its subcellular location is the cytoplasm. The enzyme catalyses uridine(54) in tRNA + (6R)-5,10-methylene-5,6,7,8-tetrahydrofolate + NADH + H(+) = 5-methyluridine(54) in tRNA + (6S)-5,6,7,8-tetrahydrofolate + NAD(+). It catalyses the reaction uridine(54) in tRNA + (6R)-5,10-methylene-5,6,7,8-tetrahydrofolate + NADPH + H(+) = 5-methyluridine(54) in tRNA + (6S)-5,6,7,8-tetrahydrofolate + NADP(+). Its function is as follows. Catalyzes the folate-dependent formation of 5-methyl-uridine at position 54 (M-5-U54) in all tRNAs. The chain is Methylenetetrahydrofolate--tRNA-(uracil-5-)-methyltransferase TrmFO from Thermosynechococcus vestitus (strain NIES-2133 / IAM M-273 / BP-1).